The following is a 144-amino-acid chain: 3-hydroxyacyl-[acyl-carrier-protein] dehydratase FabZ (144 aa).

His48 is a catalytic residue.

Belongs to the thioester dehydratase family. FabZ subfamily.

Its subcellular location is the cytoplasm. It carries out the reaction a (3R)-hydroxyacyl-[ACP] = a (2E)-enoyl-[ACP] + H2O. Involved in unsaturated fatty acids biosynthesis. Catalyzes the dehydration of short chain beta-hydroxyacyl-ACPs and long chain saturated and unsaturated beta-hydroxyacyl-ACPs. This Bacillus anthracis (strain A0248) protein is 3-hydroxyacyl-[acyl-carrier-protein] dehydratase FabZ.